A 599-amino-acid chain; its full sequence is UvrABC system protein C (599 aa).

Positions glutamate 19–valine 95 constitute a GIY-YIG domain. A UVR domain is found at glutamate 206–leucine 241.

This sequence belongs to the UvrC family. Interacts with UvrB in an incision complex.

The protein resides in the cytoplasm. Functionally, the UvrABC repair system catalyzes the recognition and processing of DNA lesions. UvrC both incises the 5' and 3' sides of the lesion. The N-terminal half is responsible for the 3' incision and the C-terminal half is responsible for the 5' incision. The chain is UvrABC system protein C from Dictyoglomus thermophilum (strain ATCC 35947 / DSM 3960 / H-6-12).